The primary structure comprises 144 residues: Large ribosomal subunit protein uL15 (144 aa).

Positions 1 to 51 (MKLNELKPATGSRSKRLRKGRGLSSGHGFTSGRGTKGQKAHGKTRLGFEGG) are disordered. Gly residues predominate over residues 23–35 (LSSGHGFTSGRGT).

Belongs to the universal ribosomal protein uL15 family. In terms of assembly, part of the 50S ribosomal subunit.

Functionally, binds to the 23S rRNA. The protein is Large ribosomal subunit protein uL15 of Limosilactobacillus reuteri (strain DSM 20016) (Lactobacillus reuteri).